A 469-amino-acid chain; its full sequence is Glutamate--tRNA ligase 2 (469 aa).

The short motif at 11-21 (PSPTGHLHLGG) is the 'HIGH' region element. The 'KMSKS' region signature appears at 238 to 242 (KLSKR). ATP is bound at residue lysine 241.

This sequence belongs to the class-I aminoacyl-tRNA synthetase family. Glutamate--tRNA ligase type 1 subfamily. As to quaternary structure, monomer.

It localises to the cytoplasm. It catalyses the reaction tRNA(Glu) + L-glutamate + ATP = L-glutamyl-tRNA(Glu) + AMP + diphosphate. In terms of biological role, catalyzes the attachment of glutamate to tRNA(Glu) in a two-step reaction: glutamate is first activated by ATP to form Glu-AMP and then transferred to the acceptor end of tRNA(Glu). The protein is Glutamate--tRNA ligase 2 of Ehrlichia chaffeensis (strain ATCC CRL-10679 / Arkansas).